Here is a 356-residue protein sequence, read N- to C-terminus: Heparan sulfate 2-O-sulfotransferase 1 (356 aa).

The Cytoplasmic segment spans residues 1 to 11 (MGLLRIMMPPK). Residues 12 to 28 (LQLLAVVAFAVAMLFLE) traverse the membrane as a helical; Signal-anchor for type II membrane protein segment. Residues 24-51 (MLFLENQIQKLEESRSKLERAIARHEVR) are a coiled coil. At 29–356 (NQIQKLEESR…FYEKIYPKSN (328 aa)) the chain is on the lumenal side. Adenosine 3',5'-bisphosphate is bound by residues Lys-83, Thr-84, Ala-85, Ser-86, Thr-87, and Ser-88. Asn-108 and Asn-127 each carry an N-linked (GlcNAc...) asparagine glycan. Active-site residues include His-140 and His-142. Adenosine 3',5'-bisphosphate contacts are provided by Arg-164 and Ser-172. 2 disulfides stabilise this stretch: Cys-201–Cys-209 and Cys-222–Cys-228. Positions 279, 285, 290, and 293 each coordinate adenosine 3',5'-bisphosphate.

This sequence belongs to the sulfotransferase 3 family. Homotrimer. Interacts with the C5-epimerase GLCE. N-glycosylated.

It localises to the golgi apparatus membrane. Catalyzes the transfer of a sulfo group from 3'-phospho-5'-adenylyl sulfate (PAPS) to the 2-OH position of iduronic acid (IdoA) or glucuronic acid (GlcA) within the heparan sulfate (HS) chain and participates in HS biosynthesis. Required for metanephric development of kidney formation, suggesting that 2-O-sulfation within HS is essential for signaling between ureteric bud and metanephric mesenchyme. The polypeptide is Heparan sulfate 2-O-sulfotransferase 1 (Pongo abelii (Sumatran orangutan)).